A 785-amino-acid polypeptide reads, in one-letter code: Endonuclease MutS2 (785 aa).

335-342 (GPNTGGKT) lines the ATP pocket. The region spanning 710–785 (LDLRGERYEN…GSGVTIVELK (76 aa)) is the Smr domain.

The protein belongs to the DNA mismatch repair MutS family. MutS2 subfamily. In terms of assembly, homodimer. Binds to stalled ribosomes, contacting rRNA.

In terms of biological role, endonuclease that is involved in the suppression of homologous recombination and thus may have a key role in the control of bacterial genetic diversity. Functionally, acts as a ribosome collision sensor, splitting the ribosome into its 2 subunits. Detects stalled/collided 70S ribosomes which it binds and splits by an ATP-hydrolysis driven conformational change. Acts upstream of the ribosome quality control system (RQC), a ribosome-associated complex that mediates the extraction of incompletely synthesized nascent chains from stalled ribosomes and their subsequent degradation. Probably generates substrates for RQC. This Bacillus velezensis (strain DSM 23117 / BGSC 10A6 / LMG 26770 / FZB42) (Bacillus amyloliquefaciens subsp. plantarum) protein is Endonuclease MutS2.